The following is a 348-amino-acid chain: Protein pelota homolog (348 aa).

The protein belongs to the eukaryotic release factor 1 family. Pelota subfamily. Monomer. Requires a divalent metal cation as cofactor.

It localises to the cytoplasm. May function in recognizing stalled ribosomes, interact with stem-loop structures in stalled mRNA molecules, and effect endonucleolytic cleavage of the mRNA. May play a role in the release non-functional ribosomes and degradation of damaged mRNAs. Has endoribonuclease activity. The protein is Protein pelota homolog of Methanococcus maripaludis (strain C6 / ATCC BAA-1332).